A 282-amino-acid chain; its full sequence is Chromatin modification-related protein YNG2 (282 aa).

The stretch at 35 to 86 (LIEEKKKYEQKESQIHKFIRQQGSIPKHPQEDGLDKEIKESLLKCQSLQREK) forms a coiled coil. The tract at residues 123-217 (DGDMDSAAEA…KGQNGSPENE (95 aa)) is disordered. A compositionally biased stretch (low complexity) spans 129 to 143 (AAEASRESSVVSNSS). S183 carries the post-translational modification Phosphoserine. Residue T185 is modified to Phosphothreonine. Residue S188 is modified to Phosphoserine. A compositionally biased stretch (basic and acidic residues) spans 191–203 (IEKKIARTKEFKN). The span at 204–214 (SRNGKGQNGSP) shows a compositional bias: polar residues. The segment at 222–271 (TLYCFCQRVSFGEMVACDGPNCKYEWFHYDCVNLKEPPKGTWYCPECKIE) adopts a PHD-type zinc-finger fold. Residues C225, C227, C238, C243, H249, C252, C265, and C268 each contribute to the Zn(2+) site.

Belongs to the ING family. As to quaternary structure, interacts with H3K4me3 and to a lesser extent with H3K4me2. Component of the NuA4 histone acetyltransferase complex composed of at least ACT1, ARP4, YAF9, VID21, SWC4, EAF3, EAF5, EAF6, EAF7, EPL1, ESA1, TRA1 and YNG2.

Its subcellular location is the nucleus. Component of the NuA4 histone acetyltransferase complex which is involved in transcriptional activation of selected genes principally by acetylation of nucleosomal histone H4 and H2A. The NuA4 complex is also involved in DNA repair. Involved in cell cycle progression and meiosis. The sequence is that of Chromatin modification-related protein YNG2 (YNG2) from Saccharomyces cerevisiae (strain ATCC 204508 / S288c) (Baker's yeast).